A 490-amino-acid chain; its full sequence is One cut domain family member 3 (490 aa).

3 disordered regions span residues 130-155 (GAHGGHPHAHPHPATAPPPPPPQRLA), 193-213 (LSPLPSALPPALHSAPQPPPP), and 287-316 (HGPHSGGGGPGGGGGAGGGSGGPGAGAAAE). A compositionally biased stretch (pro residues) spans 143-152 (ATAPPPPPPQ). The segment covering 290–311 (HSGGGGPGGGGGAGGGSGGPGA) has biased composition (gly residues). Residues 309–395 (PGAGAAAEEI…QRMSALRLAA (87 aa)) constitute a DNA-binding region (CUT). A DNA-binding region (homeobox) is located at residues 411-470 (PKKQRLVFTDLQRRTLIAIFKENKRPSKEMQATISQQLGLELNTVSNFFMNARRRCMNRW).

This sequence belongs to the CUT homeobox family. As to expression, specifically expressed in brain, stomach and gut. Within the gut, expressed only in duodenum and jejunum.

The protein localises to the nucleus. Its function is as follows. Transcriptional activator. Binds the consensus DNA sequence 5'-DHWATTGAYTWWD-3' on a variety of gene promoters such as those of HNF3B and TTR. This chain is One cut domain family member 3 (Onecut3), found in Mus musculus (Mouse).